Reading from the N-terminus, the 726-residue chain is MELTNLIEKCTKHSKDFATEVEKLWNDELSSESGLSRKTRNVIRNILRDITKSLTTDKKSKCFCILERSTINGEQIKDVYKTIFNNGVDVESRINTTGKYVLFTVMTYAAAELRLIKSDEIFALLSRFFNMICDIHRKYGCGNMFVGIPAALIVLLEIDHINKLFSVFSTRYDAKAYLYTEYFLFLNINHYLLSGSDLFINVAYGAVSFSSPISVPDYIMEALTFKACDHIMKSGDLIYIYAFTKKVKDLFNTKSDSIYQYVRLHEMSYDGVSEDTDDDDEVFAILNLSIDSSVDRYRNRVLLLTPEVASLRKEYSEAEPDYKYLMDEEVSAYDKHLPKPITNTGIEEPHATGGDKEDQPIKVVYPPNNDKDDAIKPHNPLEDPNYVPTITRTDIGIADYQLVINKLIEWLDKCEEECGNGGEFKTELEEAKRKLTELNAELSDKLSKIMSLERDSVNKTERIDRLTKEIKELRDIQNGTDDGSDSSEIDKKIIRELRESLDREREMRSKLEKELDTIRDGKVDGSCQRELELRRMWLKQRDDDLRAEIDKRRNVEWELSRLRRDIKECDKYKEDLDKAKATISNYVSRISTLESEIAKYQQDRDTLSVVRRELEEERRRVKDLESRLDECTRNQEDTQEVDALRSRIRELENKLTDCIESGGGNLTEISRLQSRISDLERQLNECRGNVTEISRLESRISDLERQLNDCRRNNETNAETERDATS.

Residues T342–I361 form a disordered region. Basic and acidic residues predominate over residues E347 to P360. The segment at T426–N713 is 4 X approximate tandem repeats. 4 repeat units span residues R612–N634, Q639–S661, T667–N689, and T691–N713.

The protein belongs to the poxviridae A25 protein family. In terms of assembly, interacts (via N-terminus) with protein A26.

It localises to the virion. Structural protein that forms a matrix surrounding the mature virion (MV) through interaction with protein A26. Presence of protein A25 in the virion structurally prevents direct virus-cell fusion mechanism. The protein is A-type inclusion protein A25 homolog of Camelus.